The chain runs to 261 residues: Imidazole glycerol phosphate synthase subunit HisF (261 aa).

Catalysis depends on residues D12 and D131.

Belongs to the HisA/HisF family. Heterodimer of HisH and HisF.

It localises to the cytoplasm. The catalysed reaction is 5-[(5-phospho-1-deoxy-D-ribulos-1-ylimino)methylamino]-1-(5-phospho-beta-D-ribosyl)imidazole-4-carboxamide + L-glutamine = D-erythro-1-(imidazol-4-yl)glycerol 3-phosphate + 5-amino-1-(5-phospho-beta-D-ribosyl)imidazole-4-carboxamide + L-glutamate + H(+). The protein operates within amino-acid biosynthesis; L-histidine biosynthesis; L-histidine from 5-phospho-alpha-D-ribose 1-diphosphate: step 5/9. Functionally, IGPS catalyzes the conversion of PRFAR and glutamine to IGP, AICAR and glutamate. The HisF subunit catalyzes the cyclization activity that produces IGP and AICAR from PRFAR using the ammonia provided by the HisH subunit. The polypeptide is Imidazole glycerol phosphate synthase subunit HisF (Brucella anthropi (strain ATCC 49188 / DSM 6882 / CCUG 24695 / JCM 21032 / LMG 3331 / NBRC 15819 / NCTC 12168 / Alc 37) (Ochrobactrum anthropi)).